Consider the following 139-residue polypeptide: Transcription antitermination protein NusB (139 aa).

This sequence belongs to the NusB family.

Functionally, involved in transcription antitermination. Required for transcription of ribosomal RNA (rRNA) genes. Binds specifically to the boxA antiterminator sequence of the ribosomal RNA (rrn) operons. This chain is Transcription antitermination protein NusB, found in Edwardsiella ictaluri (strain 93-146).